Here is a 20-residue protein sequence, read N- to C-terminus: Hongotoxin-5 (20 aa).

The protein belongs to the short scorpion toxin superfamily. Potassium channel inhibitor family. Alpha-KTx 02 subfamily. Expressed by the venom gland.

The protein resides in the secreted. Its function is as follows. Potent selective inhibitor of Kv1/KCNA voltage-gated potassium channels. This Centruroides limbatus (Bark scorpion) protein is Hongotoxin-5.